Here is a 331-residue protein sequence, read N- to C-terminus: 6-phosphogluconolactonase (331 aa).

Belongs to the cycloisomerase 2 family.

The enzyme catalyses 6-phospho-D-glucono-1,5-lactone + H2O = 6-phospho-D-gluconate + H(+). It participates in carbohydrate degradation; pentose phosphate pathway; D-ribulose 5-phosphate from D-glucose 6-phosphate (oxidative stage): step 2/3. Catalyzes the hydrolysis of 6-phosphogluconolactone to 6-phosphogluconate. The polypeptide is 6-phosphogluconolactonase (Salmonella paratyphi B (strain ATCC BAA-1250 / SPB7)).